We begin with the raw amino-acid sequence, 429 residues long: MNHDQSHALFSRAQQLLPGGVNSPVRAFKSVGGEPFFVERADGAYLYDVDGNRYIDYVGSWGPMIVGHNHPAVRQAVKKAIDNGLSFGAPCAGEVTMAETITRLVPSCEMVRMVNSGTEATLSAIRLARGATGRNRIVKFEGCYHGHGDSFLVKAGSGMLTLGVPTSPGVPAGLSELTLTLPYNDFEAATALFEQQGDDIAGLIIEPVVGNANCIPPREGYLQHLRALCTKHGALLIFDEVMTGFRVALGGAQAHYGITPDLTTFGKIIGGGMPVGAYGGRRELMQQIAPAGPIYQAGTLSGNPVAMAAGLAMLELVQQPGFHADLAERTARLCAGLEAAAADAGVAVTTTRVGAMFGLFFTSEKVETYAQATACDIPAFNRFFHAMLEQGVFLAPSAYEAGFLSSAHDDAVIEATLAAARVAFRAAKG.

Lys267 carries the post-translational modification N6-(pyridoxal phosphate)lysine.

The protein belongs to the class-III pyridoxal-phosphate-dependent aminotransferase family. HemL subfamily. In terms of assembly, homodimer. Requires pyridoxal 5'-phosphate as cofactor.

It is found in the cytoplasm. The enzyme catalyses (S)-4-amino-5-oxopentanoate = 5-aminolevulinate. It participates in porphyrin-containing compound metabolism; protoporphyrin-IX biosynthesis; 5-aminolevulinate from L-glutamyl-tRNA(Glu): step 2/2. The protein is Glutamate-1-semialdehyde 2,1-aminomutase of Stenotrophomonas maltophilia (strain K279a).